Here is a 295-residue protein sequence, read N- to C-terminus: 4-diphosphocytidyl-2-C-methyl-D-erythritol kinase (295 aa).

Residue Lys22 is part of the active site. An ATP-binding site is contributed by 106–116; the sequence is PAGGGFGGGSS. Asp148 is an active-site residue.

Belongs to the GHMP kinase family. IspE subfamily.

The enzyme catalyses 4-CDP-2-C-methyl-D-erythritol + ATP = 4-CDP-2-C-methyl-D-erythritol 2-phosphate + ADP + H(+). Its pathway is isoprenoid biosynthesis; isopentenyl diphosphate biosynthesis via DXP pathway; isopentenyl diphosphate from 1-deoxy-D-xylulose 5-phosphate: step 3/6. Functionally, catalyzes the phosphorylation of the position 2 hydroxy group of 4-diphosphocytidyl-2C-methyl-D-erythritol. In Xanthomonas axonopodis pv. citri (strain 306), this protein is 4-diphosphocytidyl-2-C-methyl-D-erythritol kinase.